We begin with the raw amino-acid sequence, 488 residues long: Bifunctional protein HldE (488 aa).

Residues 1-330 (MIDFDGLSNA…RNILPPASLA (330 aa)) form a ribokinase region. 205-208 (NSKE) lines the ATP pocket. Aspartate 275 is a catalytic residue. The cytidylyltransferase stretch occupies residues 358–488 (FTNGCFDILH…TSLVKRAGGA (131 aa)).

The protein in the N-terminal section; belongs to the carbohydrate kinase PfkB family. It in the C-terminal section; belongs to the cytidylyltransferase family. As to quaternary structure, homodimer.

It catalyses the reaction D-glycero-beta-D-manno-heptose 7-phosphate + ATP = D-glycero-beta-D-manno-heptose 1,7-bisphosphate + ADP + H(+). The enzyme catalyses D-glycero-beta-D-manno-heptose 1-phosphate + ATP + H(+) = ADP-D-glycero-beta-D-manno-heptose + diphosphate. The protein operates within nucleotide-sugar biosynthesis; ADP-L-glycero-beta-D-manno-heptose biosynthesis; ADP-L-glycero-beta-D-manno-heptose from D-glycero-beta-D-manno-heptose 7-phosphate: step 1/4. It participates in nucleotide-sugar biosynthesis; ADP-L-glycero-beta-D-manno-heptose biosynthesis; ADP-L-glycero-beta-D-manno-heptose from D-glycero-beta-D-manno-heptose 7-phosphate: step 3/4. Its function is as follows. Catalyzes the phosphorylation of D-glycero-D-manno-heptose 7-phosphate at the C-1 position to selectively form D-glycero-beta-D-manno-heptose-1,7-bisphosphate. Catalyzes the ADP transfer from ATP to D-glycero-beta-D-manno-heptose 1-phosphate, yielding ADP-D-glycero-beta-D-manno-heptose. The sequence is that of Bifunctional protein HldE from Nitrobacter winogradskyi (strain ATCC 25391 / DSM 10237 / CIP 104748 / NCIMB 11846 / Nb-255).